A 290-amino-acid polypeptide reads, in one-letter code: 33 kDa chaperonin (290 aa).

Intrachain disulfides connect C234–C236 and C267–C270.

Belongs to the HSP33 family. Under oxidizing conditions two disulfide bonds are formed involving the reactive cysteines. Under reducing conditions zinc is bound to the reactive cysteines and the protein is inactive.

Its subcellular location is the cytoplasm. Redox regulated molecular chaperone. Protects both thermally unfolding and oxidatively damaged proteins from irreversible aggregation. Plays an important role in the bacterial defense system toward oxidative stress. This is 33 kDa chaperonin from Colwellia psychrerythraea (strain 34H / ATCC BAA-681) (Vibrio psychroerythus).